The following is a 459-amino-acid chain: Cysteine--tRNA ligase (459 aa).

Residue Cys-28 participates in Zn(2+) binding. Positions 30–40 match the 'HIGH' region motif; the sequence is VTIYDLCHIGH. Zn(2+) is bound by residues Cys-209, His-234, and Glu-238. The short motif at 266-270 is the 'KMSKS' region element; the sequence is KMSKS. Lys-269 serves as a coordination point for ATP.

The protein belongs to the class-I aminoacyl-tRNA synthetase family. In terms of assembly, monomer. Zn(2+) serves as cofactor.

Its subcellular location is the cytoplasm. The enzyme catalyses tRNA(Cys) + L-cysteine + ATP = L-cysteinyl-tRNA(Cys) + AMP + diphosphate. In Shewanella loihica (strain ATCC BAA-1088 / PV-4), this protein is Cysteine--tRNA ligase.